Consider the following 776-residue polypeptide: Endonuclease MutS2 (776 aa).

Residue 328 to 335 (GPNTGGKT) participates in ATP binding. Residues 701-776 (LDLRGKRYEE…GSGATIVTFK (76 aa)) form the Smr domain.

It belongs to the DNA mismatch repair MutS family. MutS2 subfamily. In terms of assembly, homodimer. Binds to stalled ribosomes, contacting rRNA.

In terms of biological role, endonuclease that is involved in the suppression of homologous recombination and thus may have a key role in the control of bacterial genetic diversity. Functionally, acts as a ribosome collision sensor, splitting the ribosome into its 2 subunits. Detects stalled/collided 70S ribosomes which it binds and splits by an ATP-hydrolysis driven conformational change. Acts upstream of the ribosome quality control system (RQC), a ribosome-associated complex that mediates the extraction of incompletely synthesized nascent chains from stalled ribosomes and their subsequent degradation. Probably generates substrates for RQC. In Streptococcus mutans serotype c (strain ATCC 700610 / UA159), this protein is Endonuclease MutS2.